We begin with the raw amino-acid sequence, 969 residues long: Alanine--tRNA ligase (969 aa).

A mitochondrion-targeting transit peptide spans 1-8 (MIKTLLRR). 4 residues coordinate Zn(2+): His616, His620, Cys735, and His739.

The protein belongs to the class-II aminoacyl-tRNA synthetase family. As to quaternary structure, monomer. Zn(2+) is required as a cofactor.

The protein localises to the mitochondrion. It localises to the cytoplasm. It carries out the reaction tRNA(Ala) + L-alanine + ATP = L-alanyl-tRNA(Ala) + AMP + diphosphate. Functionally, catalyzes the attachment of alanine to tRNA(Ala) in a two-step reaction: alanine is first activated by ATP to form Ala-AMP and then transferred to the acceptor end of tRNA(Ala). Also edits incorrectly charged tRNA(Ala) via its editing domain. The sequence is that of Alanine--tRNA ligase from Candida albicans (strain SC5314 / ATCC MYA-2876) (Yeast).